Reading from the N-terminus, the 482-residue chain is G patch domain-containing protein 2-like (482 aa).

Phosphoserine is present on residues Ser31, Ser86, and Ser88. Thr91 is subject to Phosphothreonine. Lys196 is covalently cross-linked (Glycyl lysine isopeptide (Lys-Gly) (interchain with G-Cter in SUMO2)). Positions 198–214 (GRKERMECETDEQKQGS) are enriched in basic and acidic residues. Disordered regions lie at residues 198–247 (GRKE…DDEQ) and 413–482 (KRKR…PGYS). The segment covering 220-230 (ECETSSVCSSS) has biased composition (low complexity). The span at 439–450 (TPASQAPKSPSS) shows a compositional bias: polar residues. Phosphoserine is present on residues Ser447 and Ser449. Positions 456-469 (TSAAEKATDATTAT) are enriched in low complexity.

The chain is G patch domain-containing protein 2-like (GPATCH2L) from Homo sapiens (Human).